The sequence spans 276 residues: U6 snRNA phosphodiesterase 1 (276 aa).

Residues M1–E58 form a disordered region. The active-site Proton acceptor is H131. AMP-binding positions include H131–S133, Y213, and D215–S221. UMP-binding positions include Y213 and S217–S221. The active-site Proton donor is the H219.

The protein belongs to the 2H phosphoesterase superfamily. USB1 family.

It localises to the nucleus. The enzyme catalyses a 3'-end uridylyl-uridine-RNA = a 3'-end 2',3'-cyclophospho-uridine-RNA + uridine. The catalysed reaction is a 3'-end uridylyl-adenosine-RNA = a 3'-end 2',3'-cyclophospho-uridine-RNA + adenosine. 3'-5' RNA exonuclease that trims the 3' end of oligo(U) and oligo(A) tracts of the pre-U6 small nuclear RNA (snRNA) molecule, leading to the formation of a mature U6 snRNA 3' end-terminated with a 2',3'-cyclic phosphate. Participates in the U6 snRNA 3' end processing that prevents U6 snRNA degradation. In addition also removes uridines from the 3' end of U6atac snRNA and possibly the vault RNA VTRNA1-1. The chain is U6 snRNA phosphodiesterase 1 from Danio rerio (Zebrafish).